A 459-amino-acid polypeptide reads, in one-letter code: Serine permease SerP1 (459 aa).

12 consecutive transmembrane segments (helical) span residues 19–39, 42–62, 97–117, 119–139, 153–173, 212–232, 254–274, 281–301, 341–361, 370–390, 412–432, and 436–456; these read IQLIAIAGTIGTGLFLGAGKT, MTGPSVIFAYILIGIAMFFFL, SYWLVIVFVCISELTAIGTYI, FWLPHLPLWLIEIVMLALLFG, FWFAMIKVAAILGMIVTAIIL, FVGALQMVMFAFTSMEFIGMT, ILLFYVGALLAIMAIFNWHYI, FVIVFQLIGIKWAAALINFVV, AGIPINALYMATALSLLAPVL, AFNFAASCTTNLFLVVYFITL, PTIAVPFIAIIFAIVFASLFF, and TFYPALGAIVWTLIFGLYSHF.

Belongs to the amino acid-polyamine-organocation (APC) superfamily. Amino acid transporter (AAT) (TC 2.A.3.1) family.

It is found in the cell membrane. Transports L-serine, L-threonine and L-cysteine with high affinity. Stereoselective, with a strong preference for L-serine. Is the main L-serine transporter and is responsible for optimal growth in media containing free amino acids as the sole source of amino acids. Is also the main transporter for L-threonine. In Lactococcus lactis subsp. cremoris (strain MG1363), this protein is Serine permease SerP1.